A 361-amino-acid chain; its full sequence is tRNA-specific 2-thiouridylase MnmA (361 aa).

Residues 6 to 13 (AMSGGVDS) and Leu-32 contribute to the ATP site. Cys-99 functions as the Nucleophile in the catalytic mechanism. Cys-99 and Cys-196 are disulfide-bonded. Gly-123 contributes to the ATP binding site. The interval 145 to 147 (RDQ) is interaction with tRNA. Cys-196 functions as the Cysteine persulfide intermediate in the catalytic mechanism.

It belongs to the MnmA/TRMU family.

Its subcellular location is the cytoplasm. The enzyme catalyses S-sulfanyl-L-cysteinyl-[protein] + uridine(34) in tRNA + AH2 + ATP = 2-thiouridine(34) in tRNA + L-cysteinyl-[protein] + A + AMP + diphosphate + H(+). Its function is as follows. Catalyzes the 2-thiolation of uridine at the wobble position (U34) of tRNA, leading to the formation of s(2)U34. This Gluconobacter oxydans (strain 621H) (Gluconobacter suboxydans) protein is tRNA-specific 2-thiouridylase MnmA.